The chain runs to 177 residues: Phycoerythrin beta subunit (177 aa).

The (2R,3E)-phycoerythrobilin site is built by Tyr18, Lys28, Asn35, and Asp39. 15,16-dihydrobiliverdin is bound by residues Cys50, Asp54, and Cys61. 3 residues coordinate (2R,3E)-phycoerythrobilin: Cys82, Arg84, and Asp85. Arg129 lines the 15,16-dihydrobiliverdin pocket. A (2R,3E)-phycoerythrobilin-binding site is contributed by Asn144. 15,16-dihydrobiliverdin is bound by residues Gln148 and Lys149. Positions 154, 156, and 158 each coordinate (2R,3E)-phycoerythrobilin.

Belongs to the phycobiliprotein family. Heterotetramer of 2 different alpha chains and 2 identical beta chains which form 2 alpha-beta heterodimers within the heterotetramer. The two alpha-beta heterodimers are rotated to an open configuration in contrast to the closed configuration found in other cryptophyte species due to the insertion of a single amino acid, 'Asp-65', in a conserved region of the alpha chain. In the open form, the central chromophores are not in physical contact but are separated by a water-filled channel. In terms of processing, contains three phycoerythrobilin chromophores and one 15,16-dihydrobiliverdin chromophore with binding of the phycoerythrobilin chromophores mediated by both the alpha and beta subunits.

The protein resides in the plastid. It localises to the chloroplast thylakoid membrane. Its function is as follows. Light-harvesting photosynthetic bile pigment-protein from the phycobiliprotein complex. In Hemiselmis andersenii (Cryptophyte alga), this protein is Phycoerythrin beta subunit.